We begin with the raw amino-acid sequence, 359 residues long: Mitochondrial calcium uniporter regulator 1 (359 aa).

The Mitochondrial intermembrane segment spans residues 1–68; that stretch reads MDCGSVGGQR…ARGGVSRASP (68 aa). A helical transmembrane segment spans residues 69–85; the sequence is LLLLLLVPSPRLAAAAP. Over 86–338 the chain is Mitochondrial matrix; the sequence is RRQLGDWERS…LESHKLDNIK (253 aa). Positions 235–310 form a coiled coil; sequence EKSEFSALRA…VALHAQQDRA (76 aa). The helical transmembrane segment at 339 to 358 threads the bilayer; that stretch reads YLAGSIFTCLTVALGFYRLW. Residue I359 is a topological domain, mitochondrial intermembrane.

It belongs to the CCDC90 family. As to quaternary structure, interacts (via coiled coil regions) with MCU; the interaction is direct. Interacts with SMDT1/EMRE; the interaction is direct. Interacts with PPIF. Ubiquitously expressed.

The protein resides in the mitochondrion inner membrane. Key regulator of mitochondrial calcium uniporter (MCU) required for calcium entry into mitochondrion. Plays a direct role in uniporter-mediated calcium uptake via a direct interaction with MCU. Probably involved in the assembly of the membrane components of the uniporter complex (uniplex). The sequence is that of Mitochondrial calcium uniporter regulator 1 from Homo sapiens (Human).